A 520-amino-acid polypeptide reads, in one-letter code: GMP synthase [glutamine-hydrolyzing] (520 aa).

Positions 12–205 (KIIVLDYGSQ…AVNICGARGD (194 aa)) constitute a Glutamine amidotransferase type-1 domain. Residue C89 is the Nucleophile of the active site. Active-site residues include H179 and E181. A GMPS ATP-PPase domain is found at 206-395 (WSMDNFIDME…LGMPDEVVWR (190 aa)). ATP is bound at residue 233 to 239 (SGGVDSS).

Homodimer.

The catalysed reaction is XMP + L-glutamine + ATP + H2O = GMP + L-glutamate + AMP + diphosphate + 2 H(+). It participates in purine metabolism; GMP biosynthesis; GMP from XMP (L-Gln route): step 1/1. In terms of biological role, catalyzes the synthesis of GMP from XMP. This chain is GMP synthase [glutamine-hydrolyzing], found in Streptococcus agalactiae serotype III (strain NEM316).